The chain runs to 148 residues: UPF0179 protein Mpal_0949 (148 aa).

It belongs to the UPF0179 family.

The sequence is that of UPF0179 protein Mpal_0949 from Methanosphaerula palustris (strain ATCC BAA-1556 / DSM 19958 / E1-9c).